The primary structure comprises 236 residues: NAD-dependent protein deacetylase (236 aa).

Residues 1 to 236 form the Deacetylase sirtuin-type domain; that stretch reads MIKDWLQESN…EFLRSISNEG (236 aa). NAD(+) contacts are provided by alanine 18, threonine 22, phenylalanine 29, arginine 30, glutamine 96, valine 98, aspartate 99, and histidine 114. Residue phenylalanine 29 coordinates nicotinamide. Positions 98 and 99 each coordinate nicotinamide. The active-site Proton acceptor is the histidine 114. Positions 122, 125, 141, and 143 each coordinate Zn(2+). Residues serine 181, serine 182, asparagine 206, and isoleucine 225 each coordinate NAD(+).

The protein belongs to the sirtuin family. Class U subfamily. It depends on Zn(2+) as a cofactor.

It is found in the cytoplasm. The catalysed reaction is N(6)-acetyl-L-lysyl-[protein] + NAD(+) + H2O = 2''-O-acetyl-ADP-D-ribose + nicotinamide + L-lysyl-[protein]. Its function is as follows. NAD-dependent protein deacetylase which modulates the activities of several enzymes which are inactive in their acetylated form. The protein is NAD-dependent protein deacetylase of Oceanobacillus iheyensis (strain DSM 14371 / CIP 107618 / JCM 11309 / KCTC 3954 / HTE831).